Consider the following 140-residue polypeptide: FAD synthase (140 aa).

ATP is bound by residues 10-11 (TF), 15-18 (HPGH), and asparagine 93.

It belongs to the archaeal FAD synthase family. In terms of assembly, homodimer. A divalent metal cation is required as a cofactor.

It carries out the reaction FMN + ATP + H(+) = FAD + diphosphate. Its pathway is cofactor biosynthesis; FAD biosynthesis; FAD from FMN: step 1/1. In terms of biological role, catalyzes the transfer of the AMP portion of ATP to flavin mononucleotide (FMN) to produce flavin adenine dinucleotide (FAD) coenzyme. The polypeptide is FAD synthase (Methanocella arvoryzae (strain DSM 22066 / NBRC 105507 / MRE50)).